The sequence spans 219 residues: MRMTRDGKEHEYKKGLWTVEEDKILMDYVRTHGQGHWNRIAKKTGLKRCGKSCRLRWMNYLSPNVNRGNFTDQEEDLIIRLHKLLGNRWSLIAKRVPGRTDNQVKNYWNTHLSKKLGLGDHSTAVKAACGVESPPSMALITTTSSSHQEISGGKNSTLRFDTLVDESKLKPKSKLVHATPTDVEVAATVPNLFDTFWVLEDDFELSSLTMMDFTNGYCL.

2 HTH myb-type domains span residues Glu-9–Leu-61 and Ser-62–Leu-116. 2 DNA-binding regions (H-T-H motif) span residues Trp-37–Leu-61 and Trp-89–Leu-112.

As to quaternary structure, interacts with BHLH2/EGL3/MYC146, BHLH12/MYC1 and GL3. Expressed in roots, seed coats, leaves, stems and flowers. Detected specifically in trichomes, and in the cell division and differentiation zone of the root.

It is found in the nucleus. Its function is as follows. Transcription activator, when associated with BHLH2/EGL3/MYC146 or BHLH12/MYC1. Regulates the epidermal cell fate specification. Mediates the formation of columellae and accumulation of mucilages on seed coats. Controls the elongation of epidermal cells positively in roots but negatively in stems, leading to the promotion of primary roots elongation and repression of leaves and stems elongation, respectively. Ovoids ectopic root-hair formation, probably by inducing GL2 in roots. Controls trichome initiation and branching. This Arabidopsis thaliana (Mouse-ear cress) protein is Transcription factor MYB23 (MYB23).